A 419-amino-acid polypeptide reads, in one-letter code: Gamma-glutamyl phosphate reductase (419 aa).

The protein belongs to the gamma-glutamyl phosphate reductase family.

It localises to the cytoplasm. The catalysed reaction is L-glutamate 5-semialdehyde + phosphate + NADP(+) = L-glutamyl 5-phosphate + NADPH + H(+). The protein operates within amino-acid biosynthesis; L-proline biosynthesis; L-glutamate 5-semialdehyde from L-glutamate: step 2/2. Catalyzes the NADPH-dependent reduction of L-glutamate 5-phosphate into L-glutamate 5-semialdehyde and phosphate. The product spontaneously undergoes cyclization to form 1-pyrroline-5-carboxylate. The protein is Gamma-glutamyl phosphate reductase of Solidesulfovibrio magneticus (strain ATCC 700980 / DSM 13731 / RS-1) (Desulfovibrio magneticus).